The sequence spans 125 residues: Large ribosomal subunit protein bL12 (125 aa).

This sequence belongs to the bacterial ribosomal protein bL12 family. As to quaternary structure, homodimer. Part of the ribosomal stalk of the 50S ribosomal subunit. Forms a multimeric L10(L12)X complex, where L10 forms an elongated spine to which 2 to 4 L12 dimers bind in a sequential fashion. Binds GTP-bound translation factors.

Functionally, forms part of the ribosomal stalk which helps the ribosome interact with GTP-bound translation factors. Is thus essential for accurate translation. The sequence is that of Large ribosomal subunit protein bL12 from Azorhizobium caulinodans (strain ATCC 43989 / DSM 5975 / JCM 20966 / LMG 6465 / NBRC 14845 / NCIMB 13405 / ORS 571).